The sequence spans 141 residues: Flagellar assembly factor FliW 1 (141 aa).

Belongs to the FliW family. As to quaternary structure, interacts with translational regulator CsrA and flagellin(s).

Its subcellular location is the cytoplasm. Its function is as follows. Acts as an anti-CsrA protein, binds CsrA and prevents it from repressing translation of its target genes, one of which is flagellin. Binds to flagellin and participates in the assembly of the flagellum. The chain is Flagellar assembly factor FliW 1 from Desulfotalea psychrophila (strain LSv54 / DSM 12343).